The following is a 61-amino-acid chain: Conotoxin Am14.1 (61 aa).

Propeptides lie at residues Met1 to Arg19 and Lys52 to Gln61.

Mostly non-hydroxylated. In terms of processing, contains 2 disulfide bonds. Expressed by the venom duct.

The protein resides in the secreted. In terms of biological role, probable toxin that inhibits ion channels. The protein is Conotoxin Am14.1 of Conus amadis (Amadis cone).